Reading from the N-terminus, the 752-residue chain is Complement C2 (752 aa).

The first 20 residues, 1-20, serve as a signal peptide directing secretion; it reads MGPLMVLFCLLFLYPGLADS. Sushi domains are found at residues 22-86, 87-146, and 149-206; these read PSCP…VCKP, VRCP…VCDN, and GHCP…ICRQ. 6 disulfide bridges follow: Cys24–Cys64, Cys51–Cys84, Cys89–Cys131, Cys117–Cys144, Cys151–Cys191, and Cys177–Cys204. N-linked (GlcNAc...) asparagine glycosylation is present at Asn29. Asn112 carries N-linked (GlcNAc...) asparagine glycosylation. The VWFA domain maps to 254 to 452; sequence NLYLLLDCSQ…KALHQVFEHM (199 aa). Positions 260–264 match the MIDAS-like motif motif; it reads DCSQS. Residues Ser262 and Ser264 each coordinate Mg(2+). Residues Asn290 and Asn333 are each glycosylated (N-linked (GlcNAc...) asparagine). Thr337 contacts Mg(2+). 3 disulfide bridges follow: Cys463-Cys581, Cys492-Cys508, and Cys584-Cys600. The 281-residue stretch at 464-744 folds into the Peptidase S1 domain; the sequence is GVGNMSANAS…MQPWLRQHLG (281 aa). Residues Asn467 and Asn471 are each glycosylated (N-linked (GlcNAc...) asparagine). Catalysis depends on charge relay system residues His507 and Asp561. Asn621 is a glycosylation site (N-linked (GlcNAc...) asparagine). Cystine bridges form between Cys638–Cys665 and Cys675–Cys705. Ser679 acts as the Charge relay system in catalysis.

It belongs to the peptidase S1 family. In terms of assembly, serine protease component of the C3 convertase, also named C4bC2b, composed of the serine protease complement C2b and complement C4b. Serine protease component of the C5 convertase, also named C4bC2bC3b, composed of the serine protease complement C2b, complement C3b, as well as complement C4b. Requires Mg(2+) as cofactor. Mn(2+) is required as a cofactor. Post-translationally, cleaved and activated by different proteases depending on the complement pathway to generate complement C2a and serine protease complement C2b chains. Cleaved and activated by C1S following activation by the classical complement system. Cleaved and activated by MASP2 following activation by the lectin complement system. Cleaved and activated by GZMK following activation by the GZMK complement system.

It localises to the secreted. The protein resides in the cell surface. The enzyme catalyses Selective cleavage of Arg-|-Ser bond in complement component C3 alpha-chain to form C3a and C3b, and Arg-|-Xaa bond in complement component C5 alpha-chain to form C5a and C5b.. Precursor of the catalytic component of the C3 and C5 convertase complexes, which are part of the complement pathway, a cascade of proteins that leads to phagocytosis and breakdown of pathogens and signaling that strengthens the adaptive immune system. Component C2 is part of the classical, lectin and GZMK complement systems. Functionally, catalytic component of the complement C3 and C5 convertase complexes. Following complement activation, recruited to the surface of pathogens by complement C4b opsonin to form the C3 convertase, or C3b and C4b opsonins to form the C5 convertase. As part of the C3 convertase, cleaves and activate C3 into C3a anaphylatoxin and C3b opsonin, the next components of the complement pathways. As part of the C5 convertase, cleaves and activate C5 into C5a anaphylatoxin and C5b component of the membrane attack complex. The sequence is that of Complement C2 from Pongo pygmaeus (Bornean orangutan).